A 201-amino-acid polypeptide reads, in one-letter code: Elongation factor Ts (201 aa).

The interval 83–86 (TDFV) is involved in Mg(2+) ion dislocation from EF-Tu.

It belongs to the EF-Ts family.

Its subcellular location is the cytoplasm. Functionally, associates with the EF-Tu.GDP complex and induces the exchange of GDP to GTP. It remains bound to the aminoacyl-tRNA.EF-Tu.GTP complex up to the GTP hydrolysis stage on the ribosome. The chain is Elongation factor Ts from Methylacidiphilum infernorum (isolate V4) (Methylokorus infernorum (strain V4)).